Here is a 379-residue protein sequence, read N- to C-terminus: cAMP-dependent protein kinase type I-alpha regulatory subunit (379 aa).

The residue at position 1 (M1) is an N-acetylmethionine. Positions 1 to 134 (MASSSTSSEE…ALAKAIEKNV (134 aa)) are dimerization and phosphorylation. The tract at residues 63–93 (QMVSQQKSSSRSDSREDEVSPPMNPVVKGRR) is disordered. A Pseudophosphorylation motif motif is present at residues 94-98 (RRGAI). 3',5'-cyclic AMP is bound by residues 135–252 (LFAH…SKVS), E200, R209, 253–379 (ILES…SLSV), E324, and R333.

Belongs to the cAMP-dependent kinase regulatory chain family. The inactive holoenzyme is composed of two regulatory chains and two catalytic chains. Activation by cAMP releases the two active catalytic monomers and the regulatory dimer. Interacts with PRKACA and PRKACB. Interacts with PRRC1; resulting in PKA activation. The pseudophosphorylation site binds to the substrate-binding region of the catalytic chain, resulting in the inhibition of its activity.

Its subcellular location is the cell membrane. In terms of biological role, regulatory subunit of the cAMP-dependent protein kinases involved in cAMP signaling in cells. The chain is cAMP-dependent protein kinase type I-alpha regulatory subunit (prkar1aa) from Danio rerio (Zebrafish).